A 69-amino-acid polypeptide reads, in one-letter code: Cytochrome c oxidase subunit 8A, mitochondrial (69 aa).

The transit peptide at Met1–Lys25 directs the protein to the mitochondrion. An SIFI-degron motif is present at residues Ser2 to Leu19. The Mitochondrial matrix segment spans residues Ile26–Gly36. A helical transmembrane segment spans residues Ile37 to Ser60. Residues His61–Glu69 lie on the Mitochondrial intermembrane side of the membrane.

This sequence belongs to the cytochrome c oxidase VIII family. Component of the cytochrome c oxidase (complex IV, CIV), a multisubunit enzyme composed of 14 subunits. The complex is composed of a catalytic core of 3 subunits MT-CO1, MT-CO2 and MT-CO3, encoded in the mitochondrial DNA, and 11 supernumerary subunits COX4I1 (or COX4I2), COX5A, COX5B, COX6A1 (or COX6A2), COX6B1 (or COX6B2), COX6C, COX7A2 (or COX7A1), COX7B, COX7C, COX8A and NDUFA4, which are encoded in the nuclear genome. The complex exists as a monomer or a dimer and forms supercomplexes (SCs) in the inner mitochondrial membrane with NADH-ubiquinone oxidoreductase (complex I, CI) and ubiquinol-cytochrome c oxidoreductase (cytochrome b-c1 complex, complex III, CIII), resulting in different assemblies (supercomplex SCI(1)III(2)IV(1) and megacomplex MCI(2)III(2)IV(2)). Post-translationally, in response to mitochondrial stress, the precursor protein is ubiquitinated by the SIFI complex in the cytoplasm before mitochondrial import, leading to its degradation. Within the SIFI complex, UBR4 initiates ubiquitin chain that are further elongated or branched by KCMF1. In terms of tissue distribution, widely expressed.

The protein resides in the mitochondrion inner membrane. It functions in the pathway energy metabolism; oxidative phosphorylation. Its function is as follows. Component of the cytochrome c oxidase, the last enzyme in the mitochondrial electron transport chain which drives oxidative phosphorylation. The respiratory chain contains 3 multisubunit complexes succinate dehydrogenase (complex II, CII), ubiquinol-cytochrome c oxidoreductase (cytochrome b-c1 complex, complex III, CIII) and cytochrome c oxidase (complex IV, CIV), that cooperate to transfer electrons derived from NADH and succinate to molecular oxygen, creating an electrochemical gradient over the inner membrane that drives transmembrane transport and the ATP synthase. Cytochrome c oxidase is the component of the respiratory chain that catalyzes the reduction of oxygen to water. Electrons originating from reduced cytochrome c in the intermembrane space (IMS) are transferred via the dinuclear copper A center (CU(A)) of subunit 2 and heme A of subunit 1 to the active site in subunit 1, a binuclear center (BNC) formed by heme A3 and copper B (CU(B)). The BNC reduces molecular oxygen to 2 water molecules using 4 electrons from cytochrome c in the IMS and 4 protons from the mitochondrial matrix. This chain is Cytochrome c oxidase subunit 8A, mitochondrial (COX8A), found in Homo sapiens (Human).